A 333-amino-acid chain; its full sequence is MASDNTHRSYSIIPCFIFVELVIMAGTVLLAYYFECTDTFGIHIQGFFCNDADLLKPYPGPEESSFIQPLILYCVVAAAPTAIIFVGEISMYIMKSTGEALLAQEKTIVTGECCYLNPLIRRIIRFIGVFAFGLFATDIFVNAGQVVTGNLAPYFLNVCKPNYTGLDCHFSHQFIANGNICTGNQVVVERARRSFPSKDASLSVYSAVYVTMYITSTIKTKSSRLAKPVLCLGLLCAAFLTGLNRVSEYRNHCSDVVAGFILGSSIALFLGICVVNNFKGTHSTPTKQKQEDYRGLPLMTFPRVESPLETLSAQGKSCQATLLTSSQPNTWSA.

3 helical membrane passes run 12–32, 66–86, and 126–146; these read IIPC…LLAY, FIQP…IIFV, and FIGV…AGQV. Asn-162 is a glycosylation site (N-linked (GlcNAc...) asparagine). 3 consecutive transmembrane segments (helical) span residues 200–217, 223–243, and 256–276; these read ASLS…ITST, SRLA…LTGL, and VVAG…CVVN.

The protein belongs to the PA-phosphatase related phosphoesterase family.

The protein localises to the cell membrane. It is found in the cell projection. The protein resides in the neuron projection. Its function is as follows. May play a role in neurite outgrowth and neurogenesis. This chain is Phospholipid phosphatase-related protein type 1 (plppr1), found in Danio rerio (Zebrafish).